The primary structure comprises 295 residues: Light-independent protochlorophyllide reductase iron-sulfur ATP-binding protein (295 aa).

ATP-binding positions include 39–44 (GIGKST) and K68. S43 serves as a coordination point for Mg(2+). Residues C124 and C158 each coordinate [4Fe-4S] cluster. Residue 209-210 (NR) participates in ATP binding.

This sequence belongs to the NifH/BchL/ChlL family. As to quaternary structure, homodimer. Protochlorophyllide reductase is composed of three subunits; ChlL, ChlN and ChlB. [4Fe-4S] cluster is required as a cofactor.

The enzyme catalyses chlorophyllide a + oxidized 2[4Fe-4S]-[ferredoxin] + 2 ADP + 2 phosphate = protochlorophyllide a + reduced 2[4Fe-4S]-[ferredoxin] + 2 ATP + 2 H2O. It participates in porphyrin-containing compound metabolism; chlorophyll biosynthesis (light-independent). Its function is as follows. Component of the dark-operative protochlorophyllide reductase (DPOR) that uses Mg-ATP and reduced ferredoxin to reduce ring D of protochlorophyllide (Pchlide) to form chlorophyllide a (Chlide). This reaction is light-independent. The L component serves as a unique electron donor to the NB-component of the complex, and binds Mg-ATP. This Prochlorococcus marinus (strain AS9601) protein is Light-independent protochlorophyllide reductase iron-sulfur ATP-binding protein.